The chain runs to 512 residues: Glutathione-binding protein GsiB (512 aa).

The first 26 residues, 1–26, serve as a signal peptide directing secretion; it reads MARAVHRSGLVALGIATALMASCAFA.

It belongs to the bacterial solute-binding protein 5 family. As to quaternary structure, the complex is composed of two ATP-binding proteins (GsiA), two transmembrane proteins (GsiC and GsiD) and a solute-binding protein (GsiB).

Its subcellular location is the periplasm. Functionally, part of the ABC transporter complex GsiABCD involved in glutathione import. Binds glutathione. This is Glutathione-binding protein GsiB from Escherichia coli O157:H7.